We begin with the raw amino-acid sequence, 246 residues long: Probable transcriptional regulatory protein Dshi_2762 (246 aa).

Belongs to the TACO1 family.

The protein localises to the cytoplasm. The chain is Probable transcriptional regulatory protein Dshi_2762 from Dinoroseobacter shibae (strain DSM 16493 / NCIMB 14021 / DFL 12).